The primary structure comprises 977 residues: uncharacterized protein (977 aa).

The disordered stretch occupies residues alanine 100–tyrosine 152. Composition is skewed to basic and acidic residues over residues lysine 109–leucine 124 and glutamine 131–lysine 144. Phosphoserine is present on serine 165. Polar residues-rich tracts occupy residues proline 166–proline 175 and serine 183–histidine 193. Residues proline 166–threonine 194 form a disordered region.

This is an uncharacterized protein from Schizosaccharomyces pombe (strain 972 / ATCC 24843) (Fission yeast).